The following is a 505-amino-acid chain: Deoxyguanosinetriphosphate triphosphohydrolase (505 aa).

The 208-residue stretch at 66 to 273 (RLTHSMEVQQ…MEAADDISYC (208 aa)) folds into the HD domain.

The protein belongs to the dGTPase family. Type 1 subfamily. Homotetramer. The cofactor is Mg(2+).

It carries out the reaction dGTP + H2O = 2'-deoxyguanosine + triphosphate + H(+). In terms of biological role, dGTPase preferentially hydrolyzes dGTP over the other canonical NTPs. The polypeptide is Deoxyguanosinetriphosphate triphosphohydrolase (Shigella boydii serotype 4 (strain Sb227)).